Here is a 907-residue protein sequence, read N- to C-terminus: Collagen alpha-2(I) chain (907 aa).

Disordered regions lie at residues 1–183 (GPMG…GIPG) and 199–907 (IPGP…PGPS). Positions 19-33 (AGEDGHPGKPGRERG) are enriched in basic and acidic residues. Composition is skewed to low complexity over residues 101 to 130 (VGAP…SAGP), 155 to 169 (AGPR…VSGP), and 206 to 221 (PGPV…RGIV). A Deamidated asparagine modification is found at asparagine 260. Proline 272 is modified (4-hydroxyproline). Composition is skewed to low complexity over residues 272 to 281 (PGIRGSRGIP), 292 to 307 (PPGS…VRGP), 340 to 362 (PAGI…RGEP), 424 to 441 (PGES…SRGP), 453 to 475 (EPGV…PGER), 495 to 507 (APGA…PAGA), 535 to 555 (VGPA…QPGA), and 566 to 581 (NGPV…AGPA). A compositionally biased stretch (gly residues) spans 591–600 (GSRGDGGPPG). Low complexity-rich tracts occupy residues 601 to 611 (ATGFPGAAGRT), 664 to 691 (EAGT…IPGS), 706 to 745 (EPGP…NPGN), 756 to 766 (NSGPVGAAGAP), and 783 to 804 (EPGP…PSGP). A compositionally biased stretch (basic and acidic residues) spans 808–819 (RGDKGEPGDKGP). Positions 892-907 (AGPPGPPGPPGPPGPS) are enriched in pro residues.

The protein belongs to the fibrillar collagen family. In terms of assembly, trimers of one alpha 2(I) and two alpha 1(I) chains. Interacts (via C-terminus) with TMEM131 (via PapD-L domain); the interaction is direct and is involved in assembly and TRAPPIII ER-to-Golgi transport complex-dependent secretion of collagen. In terms of processing, prolines at the third position of the tripeptide repeating unit (G-X-Y) are hydroxylated in some or all of the chains. As to expression, forms the fibrils of tendon, ligaments and bones. In bones, the fibrils are mineralized with calcium hydroxyapatite.

The protein resides in the secreted. It is found in the extracellular space. Its subcellular location is the extracellular matrix. Its function is as follows. Type I collagen is a member of group I collagen (fibrillar forming collagen). The polypeptide is Collagen alpha-2(I) chain (Macrauchenia sp).